The chain runs to 758 residues: Calcium up-regulated protein E (758 aa).

Residues 1–22 form a disordered region; that stretch reads MINIEDISKSSNQSEEKQLKST. Ricin B-type lectin domains are found at residues 25–145 and 156–288; these read KPKY…WTTF and GYFQ…WIAN.

It belongs to the cup family.

It is found in the cytoplasm. It localises to the membrane. In terms of biological role, may play an important role in stabilizing and/or regulating the cell membrane during Ca(2+) stress or certain stages of development. This Dictyostelium discoideum (Social amoeba) protein is Calcium up-regulated protein E (cupE).